A 462-amino-acid polypeptide reads, in one-letter code: NEDD8-activating enzyme E1 catalytic subunit (462 aa).

A2 carries the post-translational modification N-acetylalanine. Residues 53–70 (HPDFEPSTESLQFLLDTC) are interaction with UBE2M N-terminus. ATP-binding positions include 100–124 (DMDT…GRPK) and 148–171 (IQDF…SIIA). Interaction with UBE2M N-terminus stretches follow at residues 157-161 (RQFHI) and 192-217 (PSSI…LPGM). The interval 227-229 (LYP) is interaction with NEDD8. Residue C237 is the Glycyl thioester intermediate of the active site. 2 interaction with NAE1 regions span residues 242–248 (MPRLPEH) and 292–295 (YNIR). Positions 331-338 (IATSAYIP) are interaction with UBE2M N-terminus. The interaction with NEDD8 stretch occupies residues 352–357 (YTYTFE). Residues 368–462 (SQLPQNIQFS…QTVLFKLHFT (95 aa)) are interaction with UBE2M core domain.

The protein belongs to the ubiquitin-activating E1 family. UBA3 subfamily. As to quaternary structure, heterodimer of UBA3 and NAE1. Interacts with NEDD8, UBE2F and UBE2M. Binds ESR1 and ESR2 with bound steroid ligand. Interacts with TBATA. Ubiquitously expressed.

The enzyme catalyses ATP + [NEDD8 protein] + [E1 NEDD8-activating enzyme]-L-cysteine = AMP + diphosphate + [E1 NEDD8-activating enzyme]-S-[NEDD8 protein]-yl-L-cysteine.. Its pathway is protein modification; protein neddylation. Binding of TP53BP2 to the regulatory subunit NAE1 decreases activity. Its function is as follows. Catalytic subunit of the dimeric UBA3-NAE1 E1 enzyme. E1 activates NEDD8 by first adenylating its C-terminal glycine residue with ATP, thereafter linking this residue to the side chain of the catalytic cysteine, yielding a NEDD8-UBA3 thioester and free AMP. E1 finally transfers NEDD8 to the catalytic cysteine of UBE2M. Down-regulates steroid receptor activity. Necessary for cell cycle progression. This chain is NEDD8-activating enzyme E1 catalytic subunit (Uba3), found in Rattus norvegicus (Rat).